We begin with the raw amino-acid sequence, 85 residues long: Acyl carrier protein (85 aa).

The 77-residue stretch at 2–78 (SQISERVIDL…DAIAYIESHA (77 aa)) folds into the Carrier domain. Position 37 is an O-(pantetheine 4'-phosphoryl)serine (S37).

It belongs to the acyl carrier protein (ACP) family. In terms of processing, 4'-phosphopantetheine is transferred from CoA to a specific serine of apo-ACP by AcpS. This modification is essential for activity because fatty acids are bound in thioester linkage to the sulfhydryl of the prosthetic group.

The protein resides in the cytoplasm. The protein operates within lipid metabolism; fatty acid biosynthesis. Its function is as follows. Carrier of the growing fatty acid chain in fatty acid biosynthesis. In Azobacteroides pseudotrichonymphae genomovar. CFP2, this protein is Acyl carrier protein.